The sequence spans 355 residues: Probable dual-specificity RNA methyltransferase RlmN 1 (355 aa).

Glu91 functions as the Proton acceptor in the catalytic mechanism. The 238-residue stretch at 99–336 folds into the Radical SAM core domain; that stretch reads RADRAAGCLS…THLRRSRGPD (238 aa). Cys106 and Cys341 are oxidised to a cystine. The [4Fe-4S] cluster site is built by Cys113, Cys117, and Cys120. S-adenosyl-L-methionine is bound by residues 163–164, Ser195, 218–220, and Asn294; these read GE and SLH. Cys341 acts as the S-methylcysteine intermediate in catalysis.

It belongs to the radical SAM superfamily. RlmN family. It depends on [4Fe-4S] cluster as a cofactor.

The protein localises to the cytoplasm. The enzyme catalyses adenosine(2503) in 23S rRNA + 2 reduced [2Fe-2S]-[ferredoxin] + 2 S-adenosyl-L-methionine = 2-methyladenosine(2503) in 23S rRNA + 5'-deoxyadenosine + L-methionine + 2 oxidized [2Fe-2S]-[ferredoxin] + S-adenosyl-L-homocysteine. It carries out the reaction adenosine(37) in tRNA + 2 reduced [2Fe-2S]-[ferredoxin] + 2 S-adenosyl-L-methionine = 2-methyladenosine(37) in tRNA + 5'-deoxyadenosine + L-methionine + 2 oxidized [2Fe-2S]-[ferredoxin] + S-adenosyl-L-homocysteine. In terms of biological role, specifically methylates position 2 of adenine 2503 in 23S rRNA and position 2 of adenine 37 in tRNAs. In Opitutus terrae (strain DSM 11246 / JCM 15787 / PB90-1), this protein is Probable dual-specificity RNA methyltransferase RlmN 1.